The chain runs to 689 residues: Beta-adrenergic receptor kinase 1 (689 aa).

An N-terminal region spans residues 1–190 (MADLEAVLAD…ELNIHLTMND (190 aa)). Residues 54–175 (TFEKIFSQKL…IESEKFTRFC (122 aa)) form the RGS domain. Positions 191 to 453 (FSVHRIIGRG…AQEVKEDPFF (263 aa)) constitute a Protein kinase domain. ATP-binding positions include 197–205 (IGRGGFGEV) and Lys-220. Asp-317 functions as the Proton acceptor in the catalytic mechanism. The 68-residue stretch at 454–521 (KAVDWQMVLL…TISERWQQEV (68 aa)) folds into the AGC-kinase C-terminal domain. One can recognise a PH domain in the interval 558-652 (DCIMHGYMSK…WKKELRDVYR (95 aa)). Residues 665 to 689 (KNKPRSPVVELSKMPLTQRGSANGL) form a disordered region. Residue Ser-670 is modified to Phosphoserine.

Belongs to the protein kinase superfamily. AGC Ser/Thr protein kinase family. GPRK subfamily. In terms of assembly, interacts with the heterodimer formed by GNB1 and GNG2. Interacts with GIT1. Interacts with, and phosphorylates chemokine-stimulated CCR5. Interacts with ARRB1. Interacts with LPAR1 and LPAR2. Interacts with RALA in response to LPAR1 activation. ADRBK1 and RALA mutually inhibit each other's binding to LPAR1. Interacts with ADRB2.

The protein resides in the cytoplasm. Its subcellular location is the cell membrane. It localises to the postsynapse. The protein localises to the presynapse. The enzyme catalyses [beta-adrenergic receptor] + ATP = [beta-adrenergic receptor]-phosphate + ADP + H(+). In contrast to other AGC family kinases, the catalytic activity is solely regulated by the binding of substrates and ligands, not by phosphorylation of the kinase domain. Its function is as follows. Specifically phosphorylates the agonist-occupied form of the beta-adrenergic and closely related receptors, probably inducing a desensitization of them. Does not act on HTR1B/5-hydroxytryptamine 1B receptor. Key regulator of LPAR1 signaling. Competes with RALA for binding to LPAR1 thus affecting the signaling properties of the receptor. Desensitizes LPAR1 and LPAR2 in a phosphorylation-independent manner. Inhibits relaxation of airway smooth muscle in response to blue light. This chain is Beta-adrenergic receptor kinase 1, found in Didelphis virginiana (North American opossum).